Here is a 153-residue protein sequence, read N- to C-terminus: Putative pre-16S rRNA nuclease (153 aa).

This sequence belongs to the YqgF nuclease family.

Its subcellular location is the cytoplasm. Could be a nuclease involved in processing of the 5'-end of pre-16S rRNA. This chain is Putative pre-16S rRNA nuclease, found in Prochlorococcus marinus (strain SARG / CCMP1375 / SS120).